A 549-amino-acid polypeptide reads, in one-letter code: Cation/acetate symporter ActP (549 aa).

The next 13 helical transmembrane spans lie at 33-53 (WQAI…TYWA), 77-97 (LAIA…ALVF), 103-123 (GLIY…LIAE), 148-168 (ILSA…QMVG), 183-203 (IAVV…GMLA), 206-226 (WVQI…AFMV), 262-282 (ISAL…PHIL), 303-323 (GFMG…IMLV), 355-375 (LFLG…VAGL), 404-424 (VSKI…VLFE), 428-448 (IAFM…PIIL), 464-484 (GGWL…TIWV), and 493-513 (IFPY…GIWF).

The protein belongs to the sodium:solute symporter (SSF) (TC 2.A.21) family.

It is found in the cell inner membrane. Functionally, transports acetate. In Salmonella arizonae (strain ATCC BAA-731 / CDC346-86 / RSK2980), this protein is Cation/acetate symporter ActP.